The following is a 35-amino-acid chain: Tamulustoxin-2 (35 aa).

Cystine bridges form between Cys2–Cys22, Cys7–Cys31, and Cys11–Cys33.

The protein belongs to the short scorpion toxin superfamily. Potassium channel inhibitor family. Expressed by the venom gland.

The protein resides in the secreted. Blocks Kv1.6/KCNA6 potassium channels. This Hottentotta tamulus (Eastern Indian scorpion) protein is Tamulustoxin-2.